The sequence spans 91 residues: Preprofallaxidin-2 (91 aa).

A signal peptide spans 1-22; it reads MASLKKSLFLVLFLGLVSLSIC. Residues 23-49 constitute a propeptide that is removed on maturation; sequence EKEKRENEGNENEEEEENHEEGSEEKR. The disordered stretch occupies residues 24 to 49; sequence KEKRENEGNENEEEEENHEEGSEEKR. Positions 31–41 are enriched in acidic residues; sequence GNENEEEEENH. At Leu65 the chain carries Leucine amide. A propeptide spanning residues 69 to 73 is cleaved from the precursor; the sequence is SEEKR. A Leucine amide modification is found at Leu89.

The protein belongs to the frog skin active peptide (FSAP) family. Dermaseptin subfamily. As to expression, expressed by the skin glands.

It localises to the secreted. Its function is as follows. Fallaxidin-3.1 shows antibacterial activity against the Gram-positive bacteria E.faecalis (MIC=100 uM) and L.lactis (MIC=100 uM). No antibacterial activity against the Gram-positive bacteria B.cereus, L.innocua, M.luteus, S.epidermidis, S.uberis and S.aureus, or the Gram-negative bacteria E.cloacae and E.coli. Fallaxidin-3.2 shows antibacterial activity against the Gram-positive bacteria E.faecalis (MIC=100 uM) and L.lactis (MIC=500 uM). No antibacterial activity against the Gram-positive bacteria B.cereus, L.innocua, M.luteus, S.epidermidis, S.uberis and S.aureus, or the Gram-negative bacteria E.cloacae and E.coli. This Litoria fallax (Eastern dwarf tree frog) protein is Preprofallaxidin-2.